The following is a 118-amino-acid chain: Large ribosomal subunit protein bL20 (118 aa).

It belongs to the bacterial ribosomal protein bL20 family.

Functionally, binds directly to 23S ribosomal RNA and is necessary for the in vitro assembly process of the 50S ribosomal subunit. It is not involved in the protein synthesizing functions of that subunit. This is Large ribosomal subunit protein bL20 from Pseudomonas aeruginosa (strain LESB58).